The primary structure comprises 178 residues: Photosystem I assembly protein Ycf4 (178 aa).

2 helical membrane passes run Ile-19–Ser-39 and Leu-61–Ile-81.

Belongs to the Ycf4 family.

It localises to the cellular thylakoid membrane. Its function is as follows. Seems to be required for the assembly of the photosystem I complex. In Synechococcus sp. (strain WH7803), this protein is Photosystem I assembly protein Ycf4.